We begin with the raw amino-acid sequence, 202 residues long: Orotate phosphoribosyltransferase (202 aa).

5-phospho-alpha-D-ribose 1-diphosphate is bound by residues Arg94, Lys98, His100, and 120–128 (EDLISTGGS). Ser124 lines the orotate pocket.

The protein belongs to the purine/pyrimidine phosphoribosyltransferase family. PyrE subfamily. As to quaternary structure, homodimer. Requires Mg(2+) as cofactor.

The catalysed reaction is orotidine 5'-phosphate + diphosphate = orotate + 5-phospho-alpha-D-ribose 1-diphosphate. It participates in pyrimidine metabolism; UMP biosynthesis via de novo pathway; UMP from orotate: step 1/2. Functionally, catalyzes the transfer of a ribosyl phosphate group from 5-phosphoribose 1-diphosphate to orotate, leading to the formation of orotidine monophosphate (OMP). The chain is Orotate phosphoribosyltransferase from Staphylococcus haemolyticus (strain JCSC1435).